The chain runs to 401 residues: Probable trafficking protein particle complex subunit 13 homolog (401 aa).

This sequence belongs to the TRAPPC13 family.

This Caenorhabditis elegans protein is Probable trafficking protein particle complex subunit 13 homolog.